Reading from the N-terminus, the 123-residue chain is Large ribosomal subunit protein bL17 (123 aa).

This sequence belongs to the bacterial ribosomal protein bL17 family. As to quaternary structure, part of the 50S ribosomal subunit. Contacts protein L32.

The chain is Large ribosomal subunit protein bL17 from Borreliella burgdorferi (strain ZS7) (Borrelia burgdorferi).